Consider the following 782-residue polypeptide: Zinc finger and SCAN domain-containing protein 10 (782 aa).

The segment at 1-37 (MLAEPVPDALEQEHPGAVKLEEDEVGEEDPRLAESRP) is disordered. An SCAN box domain is found at 1-71 (MLAEPVPDAL…GRLRELCNHW (71 aa)). Basic and acidic residues-rich tracts occupy residues 11 to 20 (EQEHPGAVKL) and 28 to 37 (EDPRLAESRP). 2 positions are modified to phosphoserine: Ser160 and Ser206. Disordered stretches follow at residues 197–233 (LAPSSNWPMSPEPQEILQDPRESNPSQGPSWLEENSR) and 290–321 (SQTEKPEVAGEPLTQTVGQETSSTGWGGTPAD). 14 consecutive C2H2-type zinc fingers follow at residues 292 to 315 (TEKPEVAGEPLTQTVGQETSSTGW), 321 to 343 (DGSEVVKVRGASDAPEPQGEMQF), 349 to 371 (GVNFPEMSHLQAHQLQSHPNLQP), 377 to 399 (SFRCLWCGKTFGRSSILKLHMRT), 421 to 443 (LTKHLLTHSSEPAFRCAECNQGF), 467 to 489 (EGKTKVPEMAAVLCSHCGQTFKR), 495 to 517 (RHLRNHAKDKDHLSSEDPGSLSS), 523 to 545 (PYVCSDCGKAFRQSEQLMIHTRR), 551 to 573 (RPFSCQVCGRCFTQNSQLISHQQ), 579 to 601 (KPHACPQCSKRFVRRAGLARHLL), 607 to 629 (RPYHCAQCGKSFRQMRDLTRHVR), 635 to 657 (KPCRCNECGEGFTQNAHLARHQR), 669 to 691 (ICGHRFRNSSNLARHRRSHTGER), and 697 to 719 (TCGRSFRRNAHLQRHLITHTGSK). The span at 302 to 313 (LTQTVGQETSST) shows a compositional bias: polar residues. Gln485 bears the N5-methylglutamine mark. The interval 491–522 (SSLKRHLRNHAKDKDHLSSEDPGSLSSSQESN) is disordered. Over residues 500–509 (HAKDKDHLSS) the composition is skewed to basic and acidic residues. Positions 510 to 521 (EDPGSLSSSQES) are enriched in low complexity.

As to quaternary structure, interacts with POU5F1/OCT4 and SOX2. In terms of processing, methylated at Gln-485 by N6AMT1. As to expression, embryonic stem (ES) cell-specific. Not expressed in adult, except in testis.

It localises to the nucleus. Its function is as follows. Embryonic stem (ES) cell-specific transcription factor required to maintain ES cell pluripotency. Can both activate and /or repress expression of target genes, depending on the context. Specifically binds the 5'-[GA]CGCNNGCG[CT]-3' DNA consensus sequence. Regulates expression of POU5F1/OCT4, ZSCAN4 and ALYREF/THOC4. The chain is Zinc finger and SCAN domain-containing protein 10 (Zscan10) from Mus musculus (Mouse).